The chain runs to 368 residues: RING finger protein 32 (368 aa).

The disordered stretch occupies residues R45–Y82. An RING-type 1; atypical zinc finger spans residues C129 to R171. The IQ domain maps to R188–P217. An RING-type 2; atypical zinc finger spans residues C295–R358.

It is found in the cytoplasm. Its function is as follows. May play a role in sperm formation. The polypeptide is RING finger protein 32 (Rnf32) (Mus musculus (Mouse)).